The following is a 317-amino-acid chain: Transcription factor MYB35 (317 aa).

HTH myb-type domains are found at residues 9 to 65 (KSNV…RPDL) and 66 to 116 (KHDS…KKKL). DNA-binding regions (H-T-H motif) lie at residues 37 to 61 (WSLI…TNYL) and 89 to 112 (WSSI…NTKL).

In terms of tissue distribution, inflorescences-specific. Accumulates in anthers, especially in tapetum and meiocytes/microsporocytes and microspores during anther development.

It localises to the nucleus. Functionally, required for anther development and early tapetal function during microspore maturation. Regulates callose dissolution required for microspores release from the tetrads. This Arabidopsis thaliana (Mouse-ear cress) protein is Transcription factor MYB35.